A 471-amino-acid chain; its full sequence is Adenosylhomocysteinase (471 aa).

Substrate contacts are provided by Thr-60, Asp-135, and Glu-196. 197–199 (TTT) provides a ligand contact to NAD(+). 2 residues coordinate substrate: Lys-226 and Asp-230. NAD(+) is bound by residues Asn-231, 260-265 (GYGDVG), Glu-283, Asn-318, 339-341 (IGH), and Asn-387.

It belongs to the adenosylhomocysteinase family. NAD(+) is required as a cofactor.

It is found in the cytoplasm. The enzyme catalyses S-adenosyl-L-homocysteine + H2O = L-homocysteine + adenosine. Its pathway is amino-acid biosynthesis; L-homocysteine biosynthesis; L-homocysteine from S-adenosyl-L-homocysteine: step 1/1. In terms of biological role, may play a key role in the regulation of the intracellular concentration of adenosylhomocysteine. The sequence is that of Adenosylhomocysteinase from Chlorobium luteolum (strain DSM 273 / BCRC 81028 / 2530) (Pelodictyon luteolum).